We begin with the raw amino-acid sequence, 371 residues long: Histidinol-phosphate aminotransferase (371 aa).

An N6-(pyridoxal phosphate)lysine modification is found at Lys-221.

The protein belongs to the class-II pyridoxal-phosphate-dependent aminotransferase family. Histidinol-phosphate aminotransferase subfamily. In terms of assembly, homodimer. Requires pyridoxal 5'-phosphate as cofactor.

The catalysed reaction is L-histidinol phosphate + 2-oxoglutarate = 3-(imidazol-4-yl)-2-oxopropyl phosphate + L-glutamate. It functions in the pathway amino-acid biosynthesis; L-histidine biosynthesis; L-histidine from 5-phospho-alpha-D-ribose 1-diphosphate: step 7/9. This Pseudoalteromonas atlantica (strain T6c / ATCC BAA-1087) protein is Histidinol-phosphate aminotransferase.